Here is a 291-residue protein sequence, read N- to C-terminus: Porphobilinogen deaminase (291 aa).

Residue Cys237 is modified to S-(dipyrrolylmethanemethyl)cysteine.

It belongs to the HMBS family. As to quaternary structure, monomer. Dipyrromethane serves as cofactor.

It carries out the reaction 4 porphobilinogen + H2O = hydroxymethylbilane + 4 NH4(+). It participates in porphyrin-containing compound metabolism; protoporphyrin-IX biosynthesis; coproporphyrinogen-III from 5-aminolevulinate: step 2/4. Tetrapolymerization of the monopyrrole PBG into the hydroxymethylbilane pre-uroporphyrinogen in several discrete steps. The polypeptide is Porphobilinogen deaminase (Clostridium perfringens (strain 13 / Type A)).